The chain runs to 908 residues: Hyphal wall protein 2 (908 aa).

An N-terminal signal peptide occupies residues 1 to 20 (MRFATTQLATLACFILTAEA). 3 stretches are compositionally biased toward low complexity: residues 110 to 187 (PKTA…TTSK), 266 to 324 (ESTT…TMKH), and 332 to 405 (HATT…KSST). Disordered regions lie at residues 110 to 221 (PKTA…PSKT) and 263 to 477 (TETE…IPKY). Positions 406–416 (PASTLEYSTSI) are enriched in polar residues. Positions 422–477 (TTSNSLSTKSTTLTTISRSSTSGSSVPNTTRESSTSTTTPNSSSSESKVSSAIPKY) are enriched in low complexity. N-linked (GlcNAc...) asparagine glycosylation is found at asparagine 449, asparagine 462, and asparagine 519. Residues 539 to 608 (GTTVRSSTSE…TSTTTPESSP (70 aa)) are compositionally biased toward low complexity. The interval 539 to 700 (GTTVRSSTSE…TSASETSSGS (162 aa)) is disordered. The span at 624–638 (TMESSASTTKNSSIQ) shows a compositional bias: polar residues. An N-linked (GlcNAc...) asparagine glycan is attached at asparagine 634. 2 stretches are compositionally biased toward low complexity: residues 639–655 (STSE…ESSV) and 662–677 (SSVP…VVTT). Residue asparagine 684 is glycosylated (N-linked (GlcNAc...) asparagine). Positions 685 to 700 (TTLEHSTSASETSSGS) are enriched in low complexity. A glycan (N-linked (GlcNAc...) asparagine) is linked at asparagine 764. The tract at residues 821–844 (VSTDVKPTTSSQGTKSTPVDTDSK) is disordered. Glycine 887 is lipidated: GPI-anchor amidated glycine. Residues 888 to 908 (TGNNMKLSFGVVIAGVAAFAI) constitute a propeptide, removed in mature form.

Post-translationally, the GPI-anchor is attached to the protein in the endoplasmic reticulum and serves to target the protein to the cell surface. There, the glucosamine-inositol phospholipid moiety is cleaved off and the GPI-modified mannoprotein is covalently attached via its lipidless GPI glycan remnant to the 1,6-beta-glucan of the outer cell wall layer.

Its subcellular location is the secreted. It localises to the cell wall. The protein resides in the membrane. Functionally, GPI-anchored cell wall protein required for mating efficiency, biofilm formation, adhesion, filamentous growth, and oxidative stress tolerance. Involved in normal disseminated infection in a mouse systemic candidiasis model. This Candida albicans (strain SC5314 / ATCC MYA-2876) (Yeast) protein is Hyphal wall protein 2 (HWP2).